The sequence spans 492 residues: NADH-quinone oxidoreductase subunit N (492 aa).

A run of 14 helical transmembrane segments spans residues 5-25 (PMTA…AWLI), 37-57 (TYFI…IDAL), 72-92 (VVDP…AVSI), 104-124 (LYEG…LVMI), 129-149 (FLTL…AIAL), 164-184 (YVLG…LYGA), 205-225 (VVLL…MGAV), 239-259 (PTAM…AWGL), 276-295 (MLVI…GIVQ), 302-322 (LAYS…AGVV), 337-357 (MFYS…VMLL), 380-400 (FAFV…AVGF), 414-434 (GLTW…FYYL), and 466-486 (VAVL…LNAI).

It belongs to the complex I subunit 2 family. NDH-1 is composed of 14 different subunits. Subunits NuoA, H, J, K, L, M, N constitute the membrane sector of the complex.

The protein localises to the cell inner membrane. It catalyses the reaction a quinone + NADH + 5 H(+)(in) = a quinol + NAD(+) + 4 H(+)(out). NDH-1 shuttles electrons from NADH, via FMN and iron-sulfur (Fe-S) centers, to quinones in the respiratory chain. The immediate electron acceptor for the enzyme in this species is believed to be ubiquinone. Couples the redox reaction to proton translocation (for every two electrons transferred, four hydrogen ions are translocated across the cytoplasmic membrane), and thus conserves the redox energy in a proton gradient. This chain is NADH-quinone oxidoreductase subunit N, found in Paraburkholderia phymatum (strain DSM 17167 / CIP 108236 / LMG 21445 / STM815) (Burkholderia phymatum).